Reading from the N-terminus, the 244-residue chain is Probable transcriptional regulatory protein Xfasm12_1059 (244 aa).

The protein belongs to the TACO1 family.

The protein localises to the cytoplasm. This Xylella fastidiosa (strain M12) protein is Probable transcriptional regulatory protein Xfasm12_1059.